We begin with the raw amino-acid sequence, 138 residues long: Small ribosomal subunit protein uS11 (138 aa).

Residues 1-12 (MAQAKKGGTAAK) are compositionally biased toward low complexity. Disordered stretches follow at residues 1 to 32 (MAQA…AAHI) and 119 to 138 (ISDV…RRRV). A compositionally biased stretch (basic residues) spans 13–22 (KGQKTRRREK).

It belongs to the universal ribosomal protein uS11 family. In terms of assembly, part of the 30S ribosomal subunit. Interacts with proteins S7 and S18. Binds to IF-3.

In terms of biological role, located on the platform of the 30S subunit, it bridges several disparate RNA helices of the 16S rRNA. Forms part of the Shine-Dalgarno cleft in the 70S ribosome. This Mycolicibacterium smegmatis (strain ATCC 700084 / mc(2)155) (Mycobacterium smegmatis) protein is Small ribosomal subunit protein uS11.